The following is a 1241-amino-acid chain: DNA-directed RNA polymerase subunit beta (1241 aa).

The disordered stretch occupies residues 1195–1219; the sequence is PQDVQENVSGENVDAGYENEDVDID.

Belongs to the RNA polymerase beta chain family. In terms of assembly, the RNAP catalytic core consists of 2 alpha, 1 beta, 1 beta' and 1 omega subunit. When a sigma factor is associated with the core the holoenzyme is formed, which can initiate transcription.

The catalysed reaction is RNA(n) + a ribonucleoside 5'-triphosphate = RNA(n+1) + diphosphate. Its function is as follows. DNA-dependent RNA polymerase catalyzes the transcription of DNA into RNA using the four ribonucleoside triphosphates as substrates. This chain is DNA-directed RNA polymerase subunit beta, found in Clostridium acetobutylicum (strain ATCC 824 / DSM 792 / JCM 1419 / IAM 19013 / LMG 5710 / NBRC 13948 / NRRL B-527 / VKM B-1787 / 2291 / W).